The sequence spans 376 residues: N,N'-diacetylbacillosaminyl-diphospho-undecaprenol alpha-1,3-N-acetylgalactosaminyltransferase (376 aa).

The protein belongs to the glycosyltransferase group 1 family.

The catalysed reaction is N,N'-diacetyl-alpha-D-bacillosaminyl-tri-trans,hepta-cis-undecaprenyl diphosphate + UDP-N-acetyl-alpha-D-galactosamine = N-acetyl-alpha-D-galactosaminyl-(1-&gt;3)-N,N'-diacetyl-alpha-D-bacillosaminyl-tri-trans,hepta-cis-undecaprenyl diphosphate + UDP + H(+). Its pathway is protein modification; protein glycosylation. In terms of biological role, adds the first GalNAc residue on to the isoprenoid-linked bacillosamine (2,4-diacetamido-2,4,6-trideoxyglucose) carrier in the N-linked protein glycosylation pathway. Acts first on the undecaprenylpyrophosphate-linked bacillosamine (Und-PP-Bac) substrate to yield the disaccharide. This Campylobacter jejuni subsp. jejuni serotype O:2 (strain ATCC 700819 / NCTC 11168) protein is N,N'-diacetylbacillosaminyl-diphospho-undecaprenol alpha-1,3-N-acetylgalactosaminyltransferase (pglA).